The following is a 339-amino-acid chain: Phenylalanine--tRNA ligase alpha subunit (339 aa).

E254 contacts Mg(2+).

This sequence belongs to the class-II aminoacyl-tRNA synthetase family. Phe-tRNA synthetase alpha subunit type 1 subfamily. As to quaternary structure, tetramer of two alpha and two beta subunits. It depends on Mg(2+) as a cofactor.

The protein localises to the cytoplasm. The catalysed reaction is tRNA(Phe) + L-phenylalanine + ATP = L-phenylalanyl-tRNA(Phe) + AMP + diphosphate + H(+). This chain is Phenylalanine--tRNA ligase alpha subunit, found in Clostridium novyi (strain NT).